Here is a 265-residue protein sequence, read N- to C-terminus: Very long chain fatty acid elongase 6 (265 aa).

The N-linked (GlcNAc...) asparagine glycan is linked to asparagine 2. The next 7 membrane-spanning stretches (helical) occupy residues 34–51 (FLFSALYAAFIFGGRHLM), 70–90 (LAVFSIFGALRTGAYMVYILM), 111–131 (FWAYAFVLSKAPELGDTIFII), 136–156 (KLIFLHWYHHITVLLYSWYSY), 159–179 (MVAGGGWFMTMNYGVHAVMYS), 197–217 (FITLSQITQMLMGCVVNYLVF), and 232–252 (IFWSSLMYLSYLVLFCHFFFE).

It belongs to the ELO family. ELOVL6 subfamily. N-Glycosylated. As to expression, ubiquitous.

It is found in the endoplasmic reticulum membrane. It carries out the reaction a very-long-chain acyl-CoA + malonyl-CoA + H(+) = a very-long-chain 3-oxoacyl-CoA + CO2 + CoA. The catalysed reaction is hexadecanoyl-CoA + malonyl-CoA + H(+) = 3-oxooctadecanoyl-CoA + CO2 + CoA. It catalyses the reaction (9Z)-hexadecenoyl-CoA + malonyl-CoA + H(+) = 3-oxo-(11Z)-octadecenoyl-CoA + CO2 + CoA. The enzyme catalyses dodecanoyl-CoA + malonyl-CoA + H(+) = 3-oxotetradecanoyl-CoA + CO2 + CoA. It carries out the reaction tetradecanoyl-CoA + malonyl-CoA + H(+) = 3-oxohexadecanoyl-CoA + CO2 + CoA. The catalysed reaction is (9Z)-octadecenoyl-CoA + malonyl-CoA + H(+) = 3-oxo-(11Z)-eicosenoyl-CoA + CO2 + CoA. It catalyses the reaction (9Z,12Z)-octadecadienoyl-CoA + malonyl-CoA + H(+) = (11Z,14Z)-3-oxoicosa-11,14-dienoyl-CoA + CO2 + CoA. The enzyme catalyses (9Z,12Z,15Z)-octadecatrienoyl-CoA + malonyl-CoA + H(+) = (11Z,14Z,17Z)-3-oxoeicosatrienoyl-CoA + CO2 + CoA. Its pathway is lipid metabolism; fatty acid biosynthesis. The reaction is stimulated by the presence of HSD17B12, the enzyme catalyzing the second step of the elongation cycle. Its function is as follows. Catalyzes the first and rate-limiting reaction of the four reactions that constitute the long-chain fatty acids elongation cycle. This endoplasmic reticulum-bound enzymatic process allows the addition of 2 carbons to the chain of long- and very long-chain fatty acids (VLCFAs) per cycle. Condensing enzyme that elongates fatty acids with 12, 14 and 16 carbons with higher activity toward C16:0 acyl-CoAs. Catalyzes the synthesis of unsaturated C16 long chain fatty acids and, to a lesser extent, C18:0 and those with low desaturation degree. May participate in the production of saturated and monounsaturated VLCFAs of different chain lengths that are involved in multiple biological processes as precursors of membrane lipids and lipid mediators. In Homo sapiens (Human), this protein is Very long chain fatty acid elongase 6.